The sequence spans 355 residues: tRNA-specific 2-thiouridylase MnmA (355 aa).

ATP is bound by residues 6 to 13 (AMSGGVDS) and Met-32. Cys-93 acts as the Nucleophile in catalysis. Residues Cys-93 and Cys-191 are joined by a disulfide bond. Gly-117 is a binding site for ATP. The interval 140–142 (KDQ) is interaction with tRNA. Cys-191 acts as the Cysteine persulfide intermediate in catalysis. Residues 296–297 (RY) are interaction with tRNA.

This sequence belongs to the MnmA/TRMU family.

Its subcellular location is the cytoplasm. It carries out the reaction S-sulfanyl-L-cysteinyl-[protein] + uridine(34) in tRNA + AH2 + ATP = 2-thiouridine(34) in tRNA + L-cysteinyl-[protein] + A + AMP + diphosphate + H(+). Functionally, catalyzes the 2-thiolation of uridine at the wobble position (U34) of tRNA, leading to the formation of s(2)U34. This chain is tRNA-specific 2-thiouridylase MnmA, found in Pelobacter propionicus (strain DSM 2379 / NBRC 103807 / OttBd1).